The sequence spans 450 residues: Bifunctional apoptosis regulator (450 aa).

The disordered stretch occupies residues 1–24; the sequence is MEEPQKNDLSMRGQEEDHPVRSSG. Residues 1 to 140 are Cytoplasmic-facing; it reads MEEPQKNDLS…PSTGRVNQQR (140 aa). The RING-type zinc-finger motif lies at 34-74; that stretch reads CHCCYDTLVNPTTLNCGHSFCRHCLALWWMSSKKTECPECR. The helical transmembrane segment at 141 to 161 threads the bilayer; the sequence is GGGFFSGVLTALTGVAVILLV. Over 162-331 the chain is Extracellular; that stretch reads YHWRSRESEH…REPTWKQWRE (170 aa). The 68-residue stretch at 182–249 folds into the SAM domain; sequence WTTEEVVLWL…LMELERVRAL (68 aa). N-linked (GlcNAc...) asparagine glycosylation is present at asparagine 232. A helical membrane pass occupies residues 332–352; it reads FLIKYSFLPYQLIAEFAWDWL. Residues 353–360 are Cytoplasmic-facing; it reads EVHYWTSR. The chain crosses the membrane as a helical span at residues 361-381; it reads FLIVNAMLLSVLELFSFWRIW. At 382-404 the chain is on the extracellular side; that stretch reads SRSELKTVPQRMWSHFWKVSTQG. The helical transmembrane segment at 405–425 threads the bilayer; sequence LFMAMFWPLIPQFVCNCLFYW. Residues 426-450 are Cytoplasmic-facing; that stretch reads ALYFNPIINIDLVVKEIRRLETQVF.

In terms of assembly, interacts with CASP8, BCL2 and BCL2L1 through SAM domain and also with HIP1, IFT57, ESRRBL1 and BCAP31. Interacts with NGFR; this interaction inhibits NF-kappa-B and JNK-related signaling pathways. Mediates RING-dependent self-ubiquitination leading to proteasomal degradation.

It is found in the endoplasmic reticulum membrane. The enzyme catalyses S-ubiquitinyl-[E2 ubiquitin-conjugating enzyme]-L-cysteine + [acceptor protein]-L-lysine = [E2 ubiquitin-conjugating enzyme]-L-cysteine + N(6)-ubiquitinyl-[acceptor protein]-L-lysine.. In terms of biological role, membrane-bound E3 ubiquitin ligase that plays a role in several processes including apoptosis regulation or reticulum endoplasmic stress. Has anti-apoptotic activity, both for apoptosis triggered via death-receptors and via mitochondrial factors. Contributes to the dynamic control of IRE1/ERN1 signaling during ER stress by inducing BAX inhibitor 1/TMBIM6 proteasomal degradation. Promotes the activation of TGF-beta signaling by mediating the 'Lys-63'-linked ubiquitination of TGFBR1 which is critical to activate the pathway. Together with NGFR, negatively regulates NF-kappa-B and JNK-related signaling pathways. Promotes the proteasome-mediated degradation of PNPLA3, a protein involveld in lipid metabolism. The polypeptide is Bifunctional apoptosis regulator (Bfar) (Rattus norvegicus (Rat)).